A 91-amino-acid polypeptide reads, in one-letter code: Small ribosomal subunit protein uS15 (91 aa).

It belongs to the universal ribosomal protein uS15 family. Part of the 30S ribosomal subunit. Forms a bridge to the 50S subunit in the 70S ribosome, contacting the 23S rRNA.

One of the primary rRNA binding proteins, it binds directly to 16S rRNA where it helps nucleate assembly of the platform of the 30S subunit by binding and bridging several RNA helices of the 16S rRNA. Its function is as follows. Forms an intersubunit bridge (bridge B4) with the 23S rRNA of the 50S subunit in the ribosome. This is Small ribosomal subunit protein uS15 from Rickettsia bellii (strain OSU 85-389).